A 172-amino-acid chain; its full sequence is Shikimate kinase (172 aa).

12 to 17 contributes to the ATP binding site; that stretch reads GSGKTS. Residue Thr-16 participates in Mg(2+) binding. Substrate is bound by residues Asp-34, Arg-58, and Gly-81. Arg-122 lines the ATP pocket. Position 139 (Arg-139) interacts with substrate.

Belongs to the shikimate kinase family. As to quaternary structure, monomer. Mg(2+) is required as a cofactor.

The protein localises to the cytoplasm. The catalysed reaction is shikimate + ATP = 3-phosphoshikimate + ADP + H(+). Its pathway is metabolic intermediate biosynthesis; chorismate biosynthesis; chorismate from D-erythrose 4-phosphate and phosphoenolpyruvate: step 5/7. Its function is as follows. Catalyzes the specific phosphorylation of the 3-hydroxyl group of shikimic acid using ATP as a cosubstrate. This Dictyoglomus turgidum (strain DSM 6724 / Z-1310) protein is Shikimate kinase.